The primary structure comprises 426 residues: C4-dicarboxylate transport protein (426 aa).

A run of 8 helical transmembrane segments spans residues 8-28 (VLYV…HFYP), 44-64 (LIKM…IAGM), 78-98 (LLYF…ATHL), 148-168 (GEIL…AHVG), 184-204 (ILFG…FGAM), 222-242 (LIGT…GFIA), 297-317 (GYSF…LFIA), and 355-375 (AATL…ILGI).

This sequence belongs to the dicarboxylate/amino acid:cation symporter (DAACS) (TC 2.A.23) family.

The protein resides in the cell inner membrane. Its function is as follows. Responsible for the transport of dicarboxylates such as succinate, fumarate, and malate from the periplasm across the membrane. In Paraburkholderia phymatum (strain DSM 17167 / CIP 108236 / LMG 21445 / STM815) (Burkholderia phymatum), this protein is C4-dicarboxylate transport protein.